The following is a 522-amino-acid chain: MSFSRSAADPADTLPDLAATLAAPGDDAFVALGDAFHTRLPAAPLPAPYVVGFSAEVAQLLGLPPSLAAHAQFAELFAGNPTRDWPAHALPYASVYSGHQFGVWAGQLGDGRALTIGELPGSDGRRYELQLKGGGRTPYSRMGDGRAVLRSSIREYLCSEAMHHLGIPTTRALTVIGSDQPVVREEIETSAVVTRVSESFVRFGHFEHFFSNDRPDLLRRLADHVIERFYPACREADDPYLALLEAAMLRTADMVAQWQAVGFCHGVMNTDNMSILGVTIDYGPFGFVDAFDANHICNHSDTSGRYAYRMQPRIAHWNCYCLAQALLPLIGLQHGIGDDDARAERAVDDAQAVLAKFPERFGPALERAMRAKLGLELEREHDAELANQLLETMHASHADFTLTFRRLAQLSKHDASRDAPVRDLFIDRAAFDAWANLYRARLSEETRDDAARAAAMNRVNPKYVLRNHLAEVAIRRAKDKDFSEVERLAQILRRPFDEQPEHEPYAALPPDWAGSLEVSCSS.

ATP is bound by residues G109, G111, R112, K132, D144, G145, R195, and R202. D271 (proton acceptor) is an active-site residue. Mg(2+) contacts are provided by N272 and D281. Residue D281 participates in ATP binding.

This sequence belongs to the SELO family. The cofactor is Mg(2+). Mn(2+) is required as a cofactor.

It carries out the reaction L-seryl-[protein] + ATP = 3-O-(5'-adenylyl)-L-seryl-[protein] + diphosphate. The catalysed reaction is L-threonyl-[protein] + ATP = 3-O-(5'-adenylyl)-L-threonyl-[protein] + diphosphate. The enzyme catalyses L-tyrosyl-[protein] + ATP = O-(5'-adenylyl)-L-tyrosyl-[protein] + diphosphate. It catalyses the reaction L-histidyl-[protein] + UTP = N(tele)-(5'-uridylyl)-L-histidyl-[protein] + diphosphate. It carries out the reaction L-seryl-[protein] + UTP = O-(5'-uridylyl)-L-seryl-[protein] + diphosphate. The catalysed reaction is L-tyrosyl-[protein] + UTP = O-(5'-uridylyl)-L-tyrosyl-[protein] + diphosphate. In terms of biological role, nucleotidyltransferase involved in the post-translational modification of proteins. It can catalyze the addition of adenosine monophosphate (AMP) or uridine monophosphate (UMP) to a protein, resulting in modifications known as AMPylation and UMPylation. This is Protein nucleotidyltransferase YdiU from Burkholderia vietnamiensis (strain G4 / LMG 22486) (Burkholderia cepacia (strain R1808)).